A 181-amino-acid chain; its full sequence is Isopentenyl-diphosphate Delta-isomerase (181 aa).

Positions 29 and 36 each coordinate Mn(2+). Positions 34-167 constitute a Nudix hydrolase domain; it reads PLHLAFSCYL…GWAISPWAAE (134 aa). The active site involves cysteine 71. Histidine 73 is a binding site for Mn(2+). Residue glutamate 91 coordinates Mg(2+). The Mn(2+) site is built by glutamate 118 and glutamate 120. Residue glutamate 120 is part of the active site.

It belongs to the IPP isomerase type 1 family. Mg(2+) serves as cofactor. Requires Mn(2+) as cofactor.

The protein resides in the cytoplasm. It carries out the reaction isopentenyl diphosphate = dimethylallyl diphosphate. It participates in isoprenoid biosynthesis; dimethylallyl diphosphate biosynthesis; dimethylallyl diphosphate from isopentenyl diphosphate: step 1/1. Catalyzes the 1,3-allylic rearrangement of the homoallylic substrate isopentenyl (IPP) to its highly electrophilic allylic isomer, dimethylallyl diphosphate (DMAPP). The polypeptide is Isopentenyl-diphosphate Delta-isomerase (Mycolicibacterium vanbaalenii (strain DSM 7251 / JCM 13017 / BCRC 16820 / KCTC 9966 / NRRL B-24157 / PYR-1) (Mycobacterium vanbaalenii)).